Reading from the N-terminus, the 274-residue chain is RsbT co-antagonist protein RsbRA (274 aa).

The 116-residue stretch at 150–265 (SAPLIPVFEN…KGIQTALEMT (116 aa)) folds into the STAS domain. 2 positions are modified to phosphothreonine: Thr-171 and Thr-205.

Interacts with RsbRB and RsbS in the stressosome. The stressosome probably also contains RsbRC and RsbRD. Phosphorylated by RsbT. This threonine phosphorylation abrogates the ability of RsbRA to stimulate RsbT in vitro.

Acts as a positive regulator of sigma-B activity in response to salt and heat stress by stimulating the activity of the RsbT kinase toward RsbS in vitro. Functionally, one of 4 functionally non-identical RsbR paralogs, it functions in the environmental signaling branch of the general stress response. Its function is as follows. Negative regulator of sigma-B activity. Non-phosphorylated RsbS binds to RsbT, preventing its association with RsbU. Requires any one of RsbRA, RsbRB, RsbRC or RsbRD to sequester RsbT. When RsbS and the RsbR paralog(s) are phosphorylated, they release RsbT, which can then bind and activate RsbU. The polypeptide is RsbT co-antagonist protein RsbRA (rsbRA) (Bacillus subtilis (strain 168)).